Reading from the N-terminus, the 943-residue chain is Protein translocase subunit SecA (943 aa).

ATP is bound by residues Gln90, 108–112 (GEGKT), and Asp509. The disordered stretch occupies residues 537-556 (NEHKPPIPKQRSSKSKGGFS).

This sequence belongs to the SecA family. Monomer and homodimer. Part of the essential Sec protein translocation apparatus which comprises SecA, SecYEG and auxiliary proteins SecDF. Other proteins may also be involved.

Its subcellular location is the cell inner membrane. It localises to the cellular thylakoid membrane. The protein localises to the cytoplasm. It catalyses the reaction ATP + H2O + cellular proteinSide 1 = ADP + phosphate + cellular proteinSide 2.. Its function is as follows. Part of the Sec protein translocase complex. Interacts with the SecYEG preprotein conducting channel. Has a central role in coupling the hydrolysis of ATP to the transfer of proteins into and across the cell membrane, serving as an ATP-driven molecular motor driving the stepwise translocation of polypeptide chains across the membrane. Functionally, probably participates in protein translocation into and across both the cytoplasmic and thylakoid membranes in cyanobacterial cells. The polypeptide is Protein translocase subunit SecA (Prochlorococcus marinus (strain MIT 9301)).